A 548-amino-acid chain; its full sequence is ATP synthase subunit alpha (548 aa).

Glycine 172–threonine 179 is an ATP binding site.

Belongs to the ATPase alpha/beta chains family. F-type ATPases have 2 components, CF(1) - the catalytic core - and CF(0) - the membrane proton channel. CF(1) has five subunits: alpha(3), beta(3), gamma(1), delta(1), epsilon(1). CF(0) has three main subunits: a(1), b(2) and c(9-12). The alpha and beta chains form an alternating ring which encloses part of the gamma chain. CF(1) is attached to CF(0) by a central stalk formed by the gamma and epsilon chains, while a peripheral stalk is formed by the delta and b chains.

It localises to the cell membrane. It catalyses the reaction ATP + H2O + 4 H(+)(in) = ADP + phosphate + 5 H(+)(out). In terms of biological role, produces ATP from ADP in the presence of a proton gradient across the membrane. The alpha chain is a regulatory subunit. The polypeptide is ATP synthase subunit alpha (Mycolicibacterium smegmatis (strain ATCC 700084 / mc(2)155) (Mycobacterium smegmatis)).